A 426-amino-acid chain; its full sequence is Zinc finger CCCH domain-containing protein 13 (426 aa).

A C3H1-type zinc finger spans residues 10 to 36; that stretch reads AYKTKLCALWQRGNCNRDTCSFAHGHG. Disordered regions lie at residues 34 to 155, 253 to 317, and 390 to 426; these read GHGD…HEKQ, NEEG…DKTS, and NDADDKTRSPAIPLQPPPVVQNAYEQYEGDDEEVDVE. Basic and acidic residues-rich tracts occupy residues 54-70, 78-101, and 108-120; these read RRDYRAGDFRGRIDRRF, PGRESRGHRPLYDRRPSSRERDSS, and RKSERRHEKKTDD. Residues 124-133 are compositionally biased toward low complexity; that stretch reads NSSRSLSLSD. Residues 135-155 are compositionally biased toward basic and acidic residues; that stretch reads NDEKKKDKFSSGDEKEDHEKQ. A coiled-coil region spans residues 144–245; the sequence is SSGDEKEDHE…FERLGDLLAS (102 aa). Positions 255–272 are enriched in polar residues; the sequence is EGSSVNEDLNERSPNTAA. Over residues 284–317 the composition is skewed to basic and acidic residues; that stretch reads EEAKAVKKRRERDSDTMTRSDKYRSDVTDFDKTS. Residues 416-426 are compositionally biased toward acidic residues; sequence YEGDDEEVDVE.

The protein is Zinc finger CCCH domain-containing protein 13 of Oryza sativa subsp. japonica (Rice).